The chain runs to 389 residues: 2-aminoethylphosphonate--pyruvate transaminase 1 (389 aa).

An N6-(pyridoxal phosphate)lysine modification is found at Lys-196.

This sequence belongs to the class-V pyridoxal-phosphate-dependent aminotransferase family. PhnW subfamily. Homodimer. Pyridoxal 5'-phosphate serves as cofactor.

It catalyses the reaction (2-aminoethyl)phosphonate + pyruvate = phosphonoacetaldehyde + L-alanine. Functionally, involved in phosphonate degradation. The chain is 2-aminoethylphosphonate--pyruvate transaminase 1 from Paraburkholderia xenovorans (strain LB400).